Consider the following 375-residue polypeptide: Erythronate-4-phosphate dehydrogenase (375 aa).

S49 contributes to the substrate binding site. Positions 150 and 178 each coordinate NAD(+). R211 is an active-site residue. D231 is an NAD(+) binding site. The active site involves E236. The active-site Proton donor is the H253. G256 is an NAD(+) binding site.

The protein belongs to the D-isomer specific 2-hydroxyacid dehydrogenase family. PdxB subfamily. Homodimer.

It localises to the cytoplasm. It catalyses the reaction 4-phospho-D-erythronate + NAD(+) = (R)-3-hydroxy-2-oxo-4-phosphooxybutanoate + NADH + H(+). The protein operates within cofactor biosynthesis; pyridoxine 5'-phosphate biosynthesis; pyridoxine 5'-phosphate from D-erythrose 4-phosphate: step 2/5. Functionally, catalyzes the oxidation of erythronate-4-phosphate to 3-hydroxy-2-oxo-4-phosphonooxybutanoate. The polypeptide is Erythronate-4-phosphate dehydrogenase (Hydrogenovibrio crunogenus (strain DSM 25203 / XCL-2) (Thiomicrospira crunogena)).